A 452-amino-acid polypeptide reads, in one-letter code: Membrane-bound lytic murein transglycosylase D (452 aa).

Positions 1-15 (MKAKAILLASVLLVG) are cleaved as a signal peptide. A lipid anchor (N-palmitoyl cysteine) is attached at C16. The S-diacylglycerol cysteine moiety is linked to residue C16. A slt-type domain region spans residues 113 to 198 (NMPMELVLLP…LLTVAAYNSG (86 aa)). The active site involves E125. LysM domains follow at residues 341–384 (RVYT…SLTI) and 400–448 (ITYR…KNNN).

Belongs to the transglycosylase Slt family.

The protein localises to the cell membrane. The catalysed reaction is Exolytic cleavage of the (1-&gt;4)-beta-glycosidic linkage between N-acetylmuramic acid (MurNAc) and N-acetylglucosamine (GlcNAc) residues in peptidoglycan, from either the reducing or the non-reducing ends of the peptidoglycan chains, with concomitant formation of a 1,6-anhydrobond in the MurNAc residue.. Murein-degrading enzyme. May play a role in recycling of muropeptides during cell elongation and/or cell division. In Escherichia coli O6:H1 (strain CFT073 / ATCC 700928 / UPEC), this protein is Membrane-bound lytic murein transglycosylase D (mltD).